The primary structure comprises 302 residues: Recombination-associated protein RdgC (302 aa).

This sequence belongs to the RdgC family.

The protein localises to the cytoplasm. It is found in the nucleoid. In terms of biological role, may be involved in recombination. The protein is Recombination-associated protein RdgC of Actinobacillus pleuropneumoniae serotype 3 (strain JL03).